Reading from the N-terminus, the 576-residue chain is RING finger and SPRY domain-containing protein 1 (576 aa).

The first 16 residues, 1 to 16 (MIVFGWAVFLASRSLG), serve as a signal peptide directing secretion. Ser-50 carries the post-translational modification Phosphoserine. The segment at 50–99 (SGTDDSVDTQQQQAENSAVPTADTRSQPRDPVRPPRRGRGPHEPRRKKQN) is disordered. Polar residues predominate over residues 57 to 68 (DTQQQQAENSAV). Over residues 83-97 (PPRRGRGPHEPRRKK) the composition is skewed to basic residues. In terms of domain architecture, B30.2/SPRY spans 300 to 483 (LFLKEGRQLT…CEFNFGAKPF (184 aa)). An N-linked (GlcNAc...) asparagine glycan is attached at Asn-314. An RING-type zinc finger spans residues 527-562 (CSLCCDEVADTQLKPCGHSDLCMDCALQLETCPLCR).

It localises to the secreted. In Homo sapiens (Human), this protein is RING finger and SPRY domain-containing protein 1 (RSPRY1).